The sequence spans 2315 residues: Receptor-type tyrosine-protein phosphatase zeta (2315 aa).

An N-terminal signal peptide occupies residues 1 to 24 (MRILKRFLACIQLLCVCRLDWANG). Residues 25 to 1636 (YYRQQRKLVE…LAEGLESEKK (1612 aa)) lie on the Extracellular side of the membrane. An Alpha-carbonic anhydrase domain is found at 36–300 (IGWSYTGALN…KFSRQVFSSY (265 aa)). 2 cysteine pairs are disulfide-bonded: C56-C240 and C133-C264. Residues N105, N134, N223, N232, N324, and N381 are each glycosylated (N-linked (GlcNAc...) asparagine). One can recognise a Fibronectin type-III domain in the interval 314–413 (EPENVQADPE…LIVDMPTDNP (100 aa)). 2 disordered regions span residues 442–462 (IVNP…PQIS) and 477–507 (AKTN…SQPV). Residues 496-507 (PNTSLNSTSQPV) show a composition bias toward polar residues. N-linked (GlcNAc...) asparagine glycans are attached at residues N497, N501, and N552. O-linked (Xyl...) (chondroitin sulfate) serine glycosylation occurs at S587. N-linked (GlcNAc...) asparagine glycans are attached at residues N602 and N629. The interval 628–650 (RNASEDSTSSGSEESLKDPSMEG) is disordered. Residue S637 is modified to Phosphoserine; alternate. S637 carries O-linked (Xyl...) (chondroitin sulfate) serine; alternate glycosylation. At S639 the chain carries Phosphoserine. An N-linked (GlcNAc...) asparagine glycan is attached at N677. S997 is a glycosylation site (O-linked (Xyl...) (chondroitin sulfate) serine). N-linked (GlcNAc...) asparagine glycosylation is found at N1017, N1050, N1082, and N1122. Polar residues predominate over residues 1123–1138 (FSVQPTHTVSQASGDT). Disordered regions lie at residues 1123–1160 (FSVQ…SSEM), 1397–1523 (KATS…EEND), 1543–1572 (LTSD…SFAD), and 1584–1621 (AGDS…NSSH). Over residues 1145–1159 (SANSEPASSDPASSE) the composition is skewed to low complexity. The span at 1417–1432 (EDGDTDDDGDDDDDDR) shows a compositional bias: acidic residues. The segment covering 1450–1465 (ESQEKVMNDSDTHENS) has biased composition (basic and acidic residues). The N-linked (GlcNAc...) asparagine glycan is linked to N1457. 2 stretches are compositionally biased toward polar residues: residues 1466-1479 (LMDQ…SLSE) and 1487-1513 (VTSV…GLSQ). 2 O-linked (Xyl...) (chondroitin sulfate) serine glycosylation sites follow: S1549 and S1551. Polar residues-rich tracts occupy residues 1554-1572 (GTSD…SFAD) and 1593-1606 (FPQS…SENS). N1562 is a glycosylation site (N-linked (GlcNAc...) asparagine). A glycan (N-linked (GlcNAc...) asparagine) is linked at N1618. The helical transmembrane segment at 1637-1662 (AVIPLVIVSALTFICLVVLVGILIYW) threads the bilayer. The Cytoplasmic segment spans residues 1663 to 2315 (RKCFQTAHFY…NIAESLESLV (653 aa)). Phosphothreonine occurs at positions 1684 and 1687. Tyrosine-protein phosphatase domains lie at 1717 to 1992 (FTEE…LVEA) and 2023 to 2282 (LEKQ…ILSL). Residues D1901, 1933 to 1939 (CSAGVGR), and Q1977 contribute to the substrate site. The active-site Phosphocysteine intermediate is C1933. S2055 is subject to Phosphoserine.

The protein belongs to the protein-tyrosine phosphatase family. Receptor class 5 subfamily. The carbonic-anhydrase like domain interacts with CNTN1 (contactin). Interacts with PTN. Interaction with PTN promotes formation of homooligomers; oligomerization impairs phosphatase activity. Interacts (via chondroitin sulfate chains) with MDK (via C-terminal); this interaction is inhibited by PTN; this interaction promotes neuronal migration. Specifically expressed in the central nervous system, where it is localized in the Purkinje cell layer of the cerebellum, the dentate gyrus, and the subependymal layer of the anterior horn of the lateral ventricle. Developmentally regulated in the brain.

It is found in the cell membrane. The protein localises to the secreted. The catalysed reaction is O-phospho-L-tyrosyl-[protein] + H2O = L-tyrosyl-[protein] + phosphate. Functionally, protein tyrosine phosphatase that negatively regulates oligodendrocyte precursor proliferation in the embryonic spinal cord. Required for normal differentiation of the precursor cells into mature, fully myelinating oligodendrocytes. May play a role in protecting oligondendrocytes against apoptosis. May play a role in the establishment of contextual memory, probably via the dephosphorylation of proteins that are part of important signaling cascades. This chain is Receptor-type tyrosine-protein phosphatase zeta (PTPRZ1), found in Homo sapiens (Human).